The chain runs to 60 residues: Large ribosomal subunit protein bL32 (60 aa).

Belongs to the bacterial ribosomal protein bL32 family.

The chain is Large ribosomal subunit protein bL32 from Kosmotoga olearia (strain ATCC BAA-1733 / DSM 21960 / TBF 19.5.1).